The following is a 109-amino-acid chain: Putative double-stranded DNA mimic protein CKO_01325 (109 aa).

The protein belongs to the putative dsDNA mimic protein family.

May act as a double-stranded DNA (dsDNA) mimic. Probably regulates the activity of a dsDNA-binding protein. The sequence is that of Putative double-stranded DNA mimic protein CKO_01325 from Citrobacter koseri (strain ATCC BAA-895 / CDC 4225-83 / SGSC4696).